The following is a 536-amino-acid chain: MSEVGKRNPACPIDRIGLKTTGMVRYNFGAAALYEEAIRRGEARLTAHGALVAETGQHTGRSPKDKFVVRDAATEPEVWWDNNKAISPAQFETLFADFLAHAANKDLYVQDLVGGADAELKLPTRVITEFAWHSLFIRNLLIRPDKAELGQFVPEMTIIDLPSFRADPARHGSRTETVIAVDLTRQIVLIGGTSYAGEMKKSVFTMLNYILPQKGVMPMHCSANEGPAGDAAVFFGLSGTGKTTLSADPSRTLIGDDEHGWGPHGIFNFEGGCYAKTIKLSAEAEPEIFATTQRFGTVLENVVLDADGVPDFNDGRLTENTRCAYPLDFIPNASKTGRASHPKNIIMLTADAFGVMPPIARLTPAQAMYHFLSGYTAKVAGTEKGVTEPEATFSTCFGAPFMPRHPSEYGNLLRELIASHGADCWLVNTGWTGGAYGTGKRMPIKATRALLTAALDGSLKTGEFRTDANFGFEVPVAVPGVDSAILDPRSTWADKPAYDRQAARLVGMFAVNFEKFEPHVDATVMGAAPRMQEAAE.

Residues R61, Y195, and K201 each contribute to the substrate site. ATP is bound by residues K201, H220, and 236-244 (GLSGTGKTT). K201 and H220 together coordinate Mn(2+). Residue D257 coordinates Mn(2+). ATP-binding residues include E285, R322, and T447. Residue R322 coordinates substrate.

The protein belongs to the phosphoenolpyruvate carboxykinase (ATP) family. Requires Mn(2+) as cofactor.

It localises to the cytoplasm. The enzyme catalyses oxaloacetate + ATP = phosphoenolpyruvate + ADP + CO2. Its pathway is carbohydrate biosynthesis; gluconeogenesis. Its function is as follows. Involved in the gluconeogenesis. Catalyzes the conversion of oxaloacetate (OAA) to phosphoenolpyruvate (PEP) through direct phosphoryl transfer between the nucleoside triphosphate and OAA. This is Phosphoenolpyruvate carboxykinase (ATP) from Mesorhizobium japonicum (strain LMG 29417 / CECT 9101 / MAFF 303099) (Mesorhizobium loti (strain MAFF 303099)).